The following is a 314-amino-acid chain: 2-dehydro-3-deoxygluconokinase (314 aa).

Substrate-binding positions include 28 to 32, Tyr-88, 102 to 104, and Arg-170; these read GDTLN and YWR. ATP is bound by residues 168 to 170, 228 to 233, and 260 to 263; these read NYR, KCGKNG, and SAGD. Position 263 (Asp-263) interacts with substrate. Asp-263 acts as the Proton acceptor in catalysis.

It belongs to the carbohydrate kinase PfkB family.

The enzyme catalyses 2-dehydro-3-deoxy-D-gluconate + ATP = 2-dehydro-3-deoxy-6-phospho-D-gluconate + ADP + H(+). It functions in the pathway carbohydrate acid metabolism; 2-dehydro-3-deoxy-D-gluconate degradation; D-glyceraldehyde 3-phosphate and pyruvate from 2-dehydro-3-deoxy-D-gluconate: step 1/2. In terms of biological role, catalyzes the phosphorylation of 2-keto-3-deoxygluconate (KDG) to produce 2-keto-3-deoxy-6-phosphogluconate (KDPG). The polypeptide is 2-dehydro-3-deoxygluconokinase (kdgK) (Haemophilus influenzae (strain ATCC 51907 / DSM 11121 / KW20 / Rd)).